Consider the following 218-residue polypeptide: Elongation factor Ts (218 aa).

The interval 82–85 (TDFV) is involved in Mg(2+) ion dislocation from EF-Tu.

It belongs to the EF-Ts family.

It localises to the cytoplasm. Functionally, associates with the EF-Tu.GDP complex and induces the exchange of GDP to GTP. It remains bound to the aminoacyl-tRNA.EF-Tu.GTP complex up to the GTP hydrolysis stage on the ribosome. The chain is Elongation factor Ts from Prochlorococcus marinus (strain MIT 9301).